Consider the following 366-residue polypeptide: Caffeic acid 3-O-methyltransferase (366 aa).

Residue 131-137 (MNQDKIL) coordinates substrate. Residues 163-181 (AFEYHGTDPRFNKIFNRGM) form a substrate binding region. Gly-209, Asp-232, Asp-252, Met-253, and Lys-266 together coordinate S-adenosyl-L-methionine. His-270 acts as the Proton acceptor in catalysis.

This sequence belongs to the class I-like SAM-binding methyltransferase superfamily. Cation-independent O-methyltransferase family. COMT subfamily. Homodimer.

It catalyses the reaction (E)-caffeate + S-adenosyl-L-methionine = (E)-ferulate + S-adenosyl-L-homocysteine + H(+). It participates in aromatic compound metabolism; phenylpropanoid biosynthesis. Functionally, catalyzes the conversion of caffeic acid to ferulic acid and of 5-hydroxyferulic acid to sinapic acid. The resulting products may subsequently be converted to the corresponding alcohols that are incorporated into lignins. In Eucalyptus gunnii (Cider gum), this protein is Caffeic acid 3-O-methyltransferase (OMT).